Reading from the N-terminus, the 168-residue chain is Cytochrome c-type biogenesis protein CcmE (168 aa).

Topologically, residues 1–7 are cytoplasmic; it reads MTRKKRR. A helical; Signal-anchor for type II membrane protein membrane pass occupies residues 8–28; the sequence is LYMLGLALLGLGTATALTLSA. Residues 29-168 lie on the Periplasmic side of the membrane; it reads FEENIVFFYS…KVHATTTLKP (140 aa). Positions 122 and 126 each coordinate heme. Residues 149-168 form a disordered region; that stretch reads SIYTPADSDDKVHATTTLKP.

The protein belongs to the CcmE/CycJ family.

It is found in the cell inner membrane. Functionally, heme chaperone required for the biogenesis of c-type cytochromes. Transiently binds heme delivered by CcmC and transfers the heme to apo-cytochromes in a process facilitated by CcmF and CcmH. The protein is Cytochrome c-type biogenesis protein CcmE of Rhodospirillum centenum (strain ATCC 51521 / SW).